Consider the following 2832-residue polypeptide: MLQNTTQSNLPREPEAKQIDYNDSIRSTYFSIDDLRACGASLAEKGTSALPGFFPFEFRARHRENEKEILRVYRATAADVEAGASITPAAEWLLDNHHVVEEAIQEVRRDFPRRFYRQLPTLSVSGTVIPRTMALAWLYVAHTHSTVTRESITAMVEGFQEHETLKIGELWALPSILRFVLIENLRRIAIRVERSRGMRRKANEVADQLIRLNDPEGCRTLLVESEALAADNTFIAQLLYRMRDGSQSSGAVIAWIEERLERRGTDVEEALVAEQNRLSSGNATMSNIIRSLREIDDTDWAVWFESVSKIDATLREGSDYAALDFGSRNTYRDTIEKLARRSGHSEHEVTEIAIEMVEEAKAAAAVEAPLQEPNVGSFLVGKQRLALEKRIGYSPSIFQHLIRSVRKLDWFAIAGPNILLTILAMIVVYAFVSPMDIPSGAKLIMLLLFALPASEGAMGLFNTVFTLFAKPSRLVGYEFLDGIPEDARTLVVVPCLIAKRDHVDELVRNLEVHYLANPRGEIYFALLSDWADSKSEEAPADTDVLEYAKREIASLSARYAYDGKTRFFLLHRRRLYNEAEGVWMGWERKRGKLHELNLLLRGDRDTSFLQGANMVPEGVQYVMTLDSDTRLMRDAVTKLVGKLYHPINRPVVNPRTQEVVTGYSLLQPRVTPSLTTGSEASAFQRIFTINRGIDPYVFTVSDVYQDIAGEGSFTGKGLYHVDAFEAALKSRIEENAVLSHDLLEGSYARCALVTDIELVEDFPIRYEVEMSRQHRWARGDWQLLPYIFNPKNGLSMLGRWKMYDNLRRSLIPVAWLAASVMGWYYMEPTPALIWQLVLIFSLFVAPTLSLISGIMPRRNDIVARAHLHTVLSDIRAANAQVALRIVFIAHNAAMMADAIVRSLYRTFVSRKLMLEWRTAAQVQSAGHGSIGDYFRAMWTAPALALVSLALAAISDTGLPFIGLPFALIWAASPAVAWFVSQSAETEDQLVVSEEAIEEMRKIARRTWRYFEAFVTAEQNFLPPDNFQETPQPVLAERTSPTNIGVYLLSVMSARSFGWIGFEETITRLEQTIATIDRMPKYRGHLFNWYRTRGLEPMEPRYVSSVDSGNLAGHLIAVSSMCREWAEAPSAHVQGNLDGIGDVAAILKEALNELPDDRKTVRPLRRLVEERIAGFQNALAAVKRERELASIRVINLAVLARDMHKLTVNLDHEVRTVQSGEVATWAGSLVAACEAHIADGVFDLGAIEALRQRLLVLKERARDIAFSMDFSFLFRPERRLLSIGYRVNANELDEACYDLLASEARLTSLFAIAKGDLPTEHWYKLGRPIVPIGARGALVSWSGSMFEYLMPPLVMQERQGGILNQTNNLVVQEQINHGRRLGTPWGISEAAFNARDHELTYQYTNFGVPTLGLKRGLGQNAVIAPYASILACMYDPKSALANLARLREVGALGAYGYHDAVDFTPTRVPEGQKCAVVRNYYAHHHGMSVAAVANVVFNGQLREWFHADPVIEAAELLLQEKAPRDIPVMAAKREPEALGKGQADLLRPEVRVVEDPINQDRETVLLSNGHYSVMLTATGAGYARWNGQSVTRWTPDPVEDRTGTFIFLRDTVTGDWWSATAEPRRAPGEKTVTRFGDDKAEFVKTVGDLTSEVECIVATEHDAEGRRVILLNTGTEDRFIEVTSYAEPVLAMDDADSSHPTFSKMFLRTEISRHGDVIWVSRNKRSPGDPDIEVAHLVTDNAGSERHTQAETDRRRFLGQGRTLAEAAAFDPGATLSGTDGFTLDPIVSLRRVVRVPAGKKVSVIFWTIAAPDREGVDRAIDRYRHPETFNHELIHAWTRSQVQMRHVGITSKEAASFQMLGRYLVYPDMHLRADAETVKTGLASQSALWPLAISGDFPIFCLRINDDGDLGIAREALRAQEYLRARGITADLVVVNERASSYAQDLQHTLDSMCENLRLRGLSDGPRQHIFAVRRDLMEPETWSTLISASRAVFHARNGTISDQIARATSLYSKSSEKKEEGAEMLLPVIREADARTAVELDGGDLDFWNGFGGFAEDGREYAVRLRGGEATPQPWINVISNEQFGFHVSAEGAAFSWSRNSRDYQLTPWTNDAVVNRPGEAIFVRDMASGAVLTPYAALSRRKSALFETRHGLGYSRFLSTQDELEIEAMHTVHRTLPAKLVRLTIRNRSSAARKLRVYGYAEWVLGNNRSRTAPFVLSEWDESAKTLVATNPYSIDYPGRCAFFASDGDIAGYTASRREFLGRAGGILAPQAVISGAELTGSTDVDGDACAALATDITVEAGVERQVTFFLGDADNPDQVRAVLEELRADSFGAALEAAKAFWGDFTGVVKVETPDRAFNHMINHWLPYQALGCRIMARSAFYQASGAFGFRDQLQDTLAFLIHRPALARAQILNAAARQFVEGDVQHWWLPGTDAGVRTMISDDVVWLAHAVAHYCAVTGEEDILKEKVPFITGPALEEGQHDSFYKPDVADEVGDVYEHCARALDLAIHRTGANGLPLILGGDWNDGMNRVGEAGEGTSVWLGWFLAGTLRAFLPYARARKDKPRVALWERHLEALKDALEQAGWDGDYYRRGYYDDDTPLGSAENGECRIDSIAQSWSTLSGEGDKERSLRAMDAVMAELVDPEKRIVRLFTPPLETTKQDPGYIKAYPPGVRENGGQYTHAATWVVLAFAAQERAEEAWRTFRMLNPVSHALSQVDAEHYRVEPYVVAADIYGEGALAGRGGWTWYTGSAGWLYRAGVEGILGIRKRGDKLLIRPVLPSEWPGYSAEVRVNGTTHRISVSRDSKSGEPVVSVNNSVTKNAHEGVLL.

7 consecutive transmembrane segments (helical) span residues 411 to 431, 444 to 464, 810 to 830, 831 to 851, 880 to 900, 938 to 958, and 959 to 979; these read FAIAGPNILLTILAMIVVYAF, IMLLLFALPASEGAMGLFNTV, LIPVAWLAASVMGWYYMEPTP, ALIWQLVLIFSLFVAPTLSLI, QVALRIVFIAHNAAMMADAIV, WTAPALALVSLALAAISDTGL, and PFIGLPFALIWAASPAVAWFV. Residues 1299 to 1506 form the Glycoamylase-like domain; the sequence is LASEARLTSL…NGQLREWFHA (208 aa).

Belongs to the NdvB family.

It localises to the cell inner membrane. It carries out the reaction [(1-&gt;2)-beta-D-glucosyl](n) + UDP-alpha-D-glucose = [(1-&gt;2)-beta-D-glucosyl](n+1) + UDP + H(+). Its function is as follows. Involved in the biosynthesis of cyclic beta-(1,2)-glucan. It seems that NdvB is involved in three enzymatic activities. First, it may catalyze the transfer of the first glucose from UDP-Glc to an unknown amino acid. In the second enzymatic activity (UDP-Glc:beta-(1,2) oligosaccharide glucosyltransferase), it may be responsible for chain elongation. Finally, in the third activity, it may catalyze glucan cyclization and release from the protein. NdvB is also involved in nodule invasion and in bacteroid development. In Rhizobium meliloti (strain 1021) (Ensifer meliloti), this protein is Cyclic beta-(1,2)-glucan synthase NdvB.